We begin with the raw amino-acid sequence, 322 residues long: Acetylglutamate kinase (322 aa).

Substrate is bound by residues 85–86, Arg-107, and Asn-211; that span reads GG.

It belongs to the acetylglutamate kinase family. ArgB subfamily.

The protein localises to the cytoplasm. It carries out the reaction N-acetyl-L-glutamate + ATP = N-acetyl-L-glutamyl 5-phosphate + ADP. It participates in amino-acid biosynthesis; L-arginine biosynthesis; N(2)-acetyl-L-ornithine from L-glutamate: step 2/4. Its function is as follows. Catalyzes the ATP-dependent phosphorylation of N-acetyl-L-glutamate. The chain is Acetylglutamate kinase from Methanosarcina barkeri (strain Fusaro / DSM 804).